The sequence spans 120 residues: Large ribosomal subunit protein uL18 (120 aa).

Belongs to the universal ribosomal protein uL18 family. As to quaternary structure, part of the 50S ribosomal subunit; part of the 5S rRNA/L5/L18/L25 subcomplex. Contacts the 5S and 23S rRNAs.

Functionally, this is one of the proteins that bind and probably mediate the attachment of the 5S RNA into the large ribosomal subunit, where it forms part of the central protuberance. The sequence is that of Large ribosomal subunit protein uL18 from Ehrlichia ruminantium (strain Gardel).